Consider the following 424-residue polypeptide: Elongation factor 1-alpha (424 aa).

A tr-type G domain is found at K5–I223. A G1 region spans residues G14–S21. G14 to S21 is a binding site for GTP. S21 serves as a coordination point for Mg(2+). A G2 region spans residues G70 to D74. The segment at D91–G94 is G3. GTP is bound by residues D91 to H95 and N148 to D151. The interval N148 to D151 is G4. The segment at S187 to Y189 is G5.

The protein belongs to the TRAFAC class translation factor GTPase superfamily. Classic translation factor GTPase family. EF-Tu/EF-1A subfamily.

The protein resides in the cytoplasm. The catalysed reaction is GTP + H2O = GDP + phosphate + H(+). Functionally, GTP hydrolase that promotes the GTP-dependent binding of aminoacyl-tRNA to the A-site of ribosomes during protein biosynthesis. This is Elongation factor 1-alpha from Thermoplasma volcanium (strain ATCC 51530 / DSM 4299 / JCM 9571 / NBRC 15438 / GSS1).